A 564-amino-acid polypeptide reads, in one-letter code: Dihydroxy-acid dehydratase (564 aa).

Asp-78 lines the Mg(2+) pocket. Cys-119 serves as a coordination point for [2Fe-2S] cluster. The Mg(2+) site is built by Asp-120 and Lys-121. Lys-121 carries the N6-carboxylysine modification. Position 192 (Cys-192) interacts with [2Fe-2S] cluster. Residue Glu-451 participates in Mg(2+) binding. Residue Ser-477 is the Proton acceptor of the active site.

It belongs to the IlvD/Edd family. In terms of assembly, homodimer. [2Fe-2S] cluster serves as cofactor. It depends on Mg(2+) as a cofactor.

The enzyme catalyses (2R)-2,3-dihydroxy-3-methylbutanoate = 3-methyl-2-oxobutanoate + H2O. It carries out the reaction (2R,3R)-2,3-dihydroxy-3-methylpentanoate = (S)-3-methyl-2-oxopentanoate + H2O. It functions in the pathway amino-acid biosynthesis; L-isoleucine biosynthesis; L-isoleucine from 2-oxobutanoate: step 3/4. It participates in amino-acid biosynthesis; L-valine biosynthesis; L-valine from pyruvate: step 3/4. Its function is as follows. Functions in the biosynthesis of branched-chain amino acids. Catalyzes the dehydration of (2R,3R)-2,3-dihydroxy-3-methylpentanoate (2,3-dihydroxy-3-methylvalerate) into 2-oxo-3-methylpentanoate (2-oxo-3-methylvalerate) and of (2R)-2,3-dihydroxy-3-methylbutanoate (2,3-dihydroxyisovalerate) into 2-oxo-3-methylbutanoate (2-oxoisovalerate), the penultimate precursor to L-isoleucine and L-valine, respectively. This Nitratiruptor sp. (strain SB155-2) protein is Dihydroxy-acid dehydratase.